The chain runs to 193 residues: Superoxide dismutase [Fe] (193 aa).

H27, H74, D157, and H161 together coordinate Fe cation.

This sequence belongs to the iron/manganese superoxide dismutase family. In terms of assembly, monomer. Fe cation serves as cofactor.

It carries out the reaction 2 superoxide + 2 H(+) = H2O2 + O2. Destroys superoxide anion radicals which are normally produced within the cells and which are toxic to biological systems. Involved in the metabolism of 4-aminophenol. May have an indirect role in hydroxyquinol metabolism by scavenging and detoxifying reactive species that promote its auto-oxidation. In Burkholderia sp, this protein is Superoxide dismutase [Fe].